A 357-amino-acid chain; its full sequence is DENN domain-containing protein 10 (357 aa).

The 136-residue stretch at 1 to 136 (MAAVVAMDTQ…IAVLTKGICQ (136 aa)) folds into the uDENN domain. Residues 152–299 (KAYLAGSIKD…PEKSDSQVIQ (148 aa)) form the cDENN domain. Residues 301-357 (IALKTKEIFTHLAPFSEVSDDGGKVILNVEALKQQRFPPATENFLYHLAAAEQMLKV) form the dDENN domain.

This sequence belongs to the DENND10 family. As to quaternary structure, interacts with the coiled-coil heterodimer of CCDC22 and CCDC93; the interaction is direct. Interacts with RAB27A and RAB27B (GDP-bound forms preferentially).

The protein resides in the late endosome. In terms of biological role, guanine nucleotide exchange factor (GEF) regulating homeostasis of late endocytic pathway, including endosomal positioning, maturation and secretion, possibly through activating Rab proteins such as RAB27A and RAB27B. Promotes the exchange of GDP to GTP, converting inactive GDP-bound RAB27A and RAB27B into their active GTP-bound form. In Mus musculus (Mouse), this protein is DENN domain-containing protein 10.